A 367-amino-acid chain; its full sequence is F-box only protein 25 (367 aa).

The interaction with beta-actin stretch occupies residues 1 to 83 (MPFLGQDWRS…NDTNTQSFYR (83 aa)). Positions 226–274 (LTLSDLPLHMLNNILYRFSDGWDIITLGQVTPTLYMLSEDRQLWKKLCQ) constitute an F-box domain.

In terms of assembly, part of a SCF (SKP1-cullin-F-box) protein ligase complex consisting of FBXO25, SKP1, CUL1 and RBX1. Interacts directly with SKP1 and CUL1. Interacts (via C-terminus) with beta-actin (via N-terminus). Expressed in all brain tissue observed.

It localises to the nucleus. The protein operates within protein modification; protein ubiquitination. Substrate-recognition component of the SCF (SKP1-CUL1-F-box protein)-type E3 ubiquitin ligase complex. May play a role in accumulation of expanded polyglutamine (polyQ) protein huntingtin (HTT). This Homo sapiens (Human) protein is F-box only protein 25 (FBXO25).